Consider the following 427-residue polypeptide: MGGDLVLGLGALRRRKRLLEQEKSLAGWALVLAGTGIGLMVLHAEMLWFGGCSWALYLFLVKCTISISTFLLLCLIVAFHAKEVQLFMTDNGLRDWRVALTGRQAAQIVLELVVCGLHPAPVRGPPCVQDLGAPLTSPQPWPGFLGQGEALLSLAMLLRLYLVPRAVLLRSGVLLNASYRSIGALNQVRFRHWFVAKLYMNTHPGRLLLGLTLGLWLTTAWVLSVAERQAVNATGHLSDTLWLIPITFLTIGYGDVVPGTMWGKIVCLCTGVMGVCCTALLVAVVARKLEFNKAEKHVHNFMMDIQYTKEMKESAARVLQEAWMFYKHTRRKESHAARRHQRKLLAAINAFRQVRLKHRKLREQVNSMVDISKMHMILYDLQQNLSSSHRALEKQIDTLAGKLDALTELLSTALGPRQLPEPSQQSK.

A helical membrane pass occupies residues A29–F49. The helical transmembrane segment at F59–F79 threads the bilayer. Residues I108–V128 form a helical membrane-spanning segment. A helical transmembrane segment spans residues G143–V163. Residues L207–E227 form a helical membrane-spanning segment. Positions L241–M261 form an intramembrane region, pore-forming. The chain crosses the membrane as a helical span at residues I265 to V285. Residues A286–A347 form a calmodulin-binding region. At H358 the chain carries Phosphohistidine.

Belongs to the potassium channel KCNN family. KCa3.1/KCNN4 subfamily. As to quaternary structure, homodimer. Homotetramer. Heterotetramer of potassium channel proteins. Interacts with MTMR6; this interaction leads to selective dephosphorylation of PI(3)P in a lipid microdomain adjacent to KCNN4, resulting in a decrease of intermediate conductance calcium-activated potassium channel activity. Interacts (via the C-tail domain) with CALM1; the calmodulin binding is constitutive, does not require calcium and mediates calcium-dependent gating and four calmodulin molecules bind to one channel tetramer. Post-translationally, phosphorylation at His-358 by NDKB activates the intermediate conductance calcium-activated potassium channel activity, and conversely it's dephosphorylation by PHPT1 inhibits this activity. In terms of tissue distribution, widely expressed in non-excitable tissues.

The protein localises to the cell membrane. It localises to the cell projection. Its subcellular location is the ruffle membrane. The catalysed reaction is K(+)(in) = K(+)(out). Its activity is regulated as follows. The channel is inhibited by clotrimazole and charybdotoxin but is insensitive to apamin. Its function is as follows. Intermediate conductance calcium-activated potassium channel that mediates the voltage-independent transmembrane transfer of potassium across the cell membrane through a constitutive interaction with calmodulin which binds the intracellular calcium allowing its opening. The current is characterized by a voltage-independent activation, an intracellular calcium concentration increase-dependent activation and a single-channel conductance of about 25 picosiemens. Also presents an inwardly rectifying current, thus reducing its already small outward conductance of potassium ions, which is particularly the case when the membrane potential displays positive values, above + 20 mV. Controls calcium influx during vascular contractility by being responsible of membrane hyperpolarization induced by vasoactive factors in proliferative vascular smooth muscle cell types. Following calcium influx, the consecutive activation of KCNN4 channel leads to a hyperpolarization of the cell membrane potential and hence an increase of the electrical driving force for further calcium influx promoting sustained calcium entry in response to stimulation with chemotactic peptides. Required for maximal calcium influx and proliferation during the reactivation of naive T-cells. Plays a role in the late stages of EGF-induced macropinocytosis through activation by PI(3)P. The chain is Intermediate conductance calcium-activated potassium channel protein 4 from Homo sapiens (Human).